The chain runs to 122 residues: Transcription initiation factor IIA subunit 2 (122 aa).

Residues Ser-95 and Ser-102 each carry the phosphoserine modification.

It belongs to the TFIIA subunit 2 family. As to quaternary structure, TFIIA is a heterodimer composed of the large TOA1 and a small TOA2 subunits. Interacts with TBP. Interacts with TAF11. Interacts with KAP122.

It is found in the cytoplasm. The protein localises to the nucleus. Functionally, TFIIA is a component of the transcription machinery of RNA polymerase II and plays an important role in transcriptional activation. TFIIA in a complex with TBP mediates transcriptional activity. In Saccharomyces cerevisiae (strain ATCC 204508 / S288c) (Baker's yeast), this protein is Transcription initiation factor IIA subunit 2 (TOA2).